We begin with the raw amino-acid sequence, 181 residues long: Resolvase/recombinase (181 aa).

The 136-residue stretch at 2-137 (RLFGYARVST…EGRLEAKAKG (136 aa)) folds into the Resolvase/invertase-type recombinase catalytic domain. Catalysis depends on Ser-10, which acts as the O-(5'-phospho-DNA)-serine intermediate. Residues 161–180 (AMEIAKRLKIGRSTVYKVLA) constitute a DNA-binding region (H-T-H motif).

The protein belongs to the site-specific recombinase resolvase family.

Functionally, site-specific recombination protein. This Pseudomonas putida (Arthrobacter siderocapsulatus) protein is Resolvase/recombinase.